The following is a 118-amino-acid chain: Fluoride-specific ion channel FluC 1 (118 aa).

A run of 4 helical transmembrane segments spans residues 5-25 (FLLV…ISIF), 39-59 (FFIN…ALGP), 61-81 (WQLF…TFKV), and 98-118 (YVGL…MLGV). The Na(+) site is built by G71 and T74.

Belongs to the fluoride channel Fluc/FEX (TC 1.A.43) family.

Its subcellular location is the cell membrane. The enzyme catalyses fluoride(in) = fluoride(out). Its activity is regulated as follows. Na(+) is not transported, but it plays an essential structural role and its presence is essential for fluoride channel function. Fluoride-specific ion channel. Important for reducing fluoride concentration in the cell, thus reducing its toxicity. In Listeria innocua serovar 6a (strain ATCC BAA-680 / CLIP 11262), this protein is Fluoride-specific ion channel FluC 1.